We begin with the raw amino-acid sequence, 234 residues long: ATP-dependent dethiobiotin synthetase BioD (234 aa).

ATP is bound at residue 12–17 (GAGKTI). T16 serves as a coordination point for Mg(2+). K39 is a catalytic residue. T43 is a substrate binding site. Residues D47, 108-111 (EGLG), 168-169 (SC), and 200-202 (PYL) contribute to the ATP site. Positions 47 and 108 each coordinate Mg(2+).

The protein belongs to the dethiobiotin synthetase family. In terms of assembly, homodimer. It depends on Mg(2+) as a cofactor.

Its subcellular location is the cytoplasm. The catalysed reaction is (7R,8S)-7,8-diammoniononanoate + CO2 + ATP = (4R,5S)-dethiobiotin + ADP + phosphate + 3 H(+). The enzyme catalyses (7R,8S)-8-amino-7-(carboxyamino)nonanoate + ATP = (4R,5S)-dethiobiotin + ADP + phosphate + H(+). It functions in the pathway cofactor biosynthesis; biotin biosynthesis; biotin from 7,8-diaminononanoate: step 1/2. Functionally, catalyzes a mechanistically unusual reaction, the ATP-dependent insertion of CO2 between the N7 and N8 nitrogen atoms of 7,8-diaminopelargonic acid (DAPA, also called 7,8-diammoniononanoate) to form a ureido ring. This cyanobacterium does not encode bioA (which catalyzes the formation of the precursor for this reaction in the cannonical pathway), instead it encodes bioU, which replaces bioA and also performs the first half of the cannonical BioD reaction. Thus in this organism BioD has a different substrate. This Rippkaea orientalis (strain PCC 8801 / RF-1) (Cyanothece sp. (strain PCC 8801)) protein is ATP-dependent dethiobiotin synthetase BioD.